The sequence spans 125 residues: Small ribosomal subunit protein bS6 (125 aa).

Residues 96-125 are disordered; the sequence is ETGASSMMKTVEREEARKASQAEFAAANER. Positions 105 to 115 are enriched in basic and acidic residues; the sequence is TVEREEARKAS.

This sequence belongs to the bacterial ribosomal protein bS6 family.

Functionally, binds together with bS18 to 16S ribosomal RNA. This chain is Small ribosomal subunit protein bS6, found in Paracidovorax citrulli (strain AAC00-1) (Acidovorax citrulli).